The sequence spans 326 residues: MPTAPLRITVIGSGVIGLSAAHELAAAGHQVTVAYDQELAECVSSVAAAIWFPYHSENSPAADKLLADSLARFEQLSEHPETGIDLRRGLNVDHLPGADRSWTRIVAGTEEASPADLPDGAHAGVWATVPIITMSTYLGWLRGRVEELGADFAKGTVTDLAQLKGGADLVVLAAGLRGGELLGDDDTVYPIRGQVVRLANTKNLTQWLCDDNYPDGVSYIIPRREDIIVGGTDTANDWNREVEPQTSIDILERAAKLVPELEGLEVLEHKVGLRPARETIRLEHVAGHPLPVIAAYGHGGAGVTLSWGTAQRVAELAAQLAGEPAS.

FAD-binding residues include Gly-14, Val-15, Ile-16, Asp-36, Ser-44, Ala-48, Ala-49, Ile-50, and Val-157. The D-proline site is built by Tyr-219 and Arg-274. The D-serine site is built by Tyr-219 and Arg-274. 5 residues coordinate FAD: Arg-274, Gly-299, Gly-300, Gly-302, and Thr-304. Gly-300 provides a ligand contact to D-proline. Residue Gly-300 participates in D-serine binding.

Belongs to the DAMOX/DASOX family. Homodimer. The cofactor is FAD.

Its subcellular location is the cytoplasm. It is found in the secreted. The protein resides in the cell wall. It carries out the reaction a D-alpha-amino acid + O2 + H2O = a 2-oxocarboxylate + H2O2 + NH4(+). The enzyme catalyses D-phenylalanine + O2 + H2O = 3-phenylpyruvate + H2O2 + NH4(+). It catalyses the reaction D-lysine + O2 + H2O = 6-amino-2-oxohexanoate + H2O2 + NH4(+). The catalysed reaction is D-methionine + O2 + H2O = 4-methylsulfanyl-2-oxobutanoate + H2O2 + NH4(+). It carries out the reaction D-arginine + O2 + H2O = 5-guanidino-2-oxopentanoate + H2O2 + NH4(+). The enzyme catalyses D-ornithine + O2 + H2O = 5-amino-2-oxopentanoate + H2O2 + NH4(+). It catalyses the reaction D-leucine + O2 + H2O = 4-methyl-2-oxopentanoate + H2O2 + NH4(+). The catalysed reaction is D-alanine + O2 + H2O = pyruvate + H2O2 + NH4(+). It carries out the reaction D-valine + O2 + H2O = 3-methyl-2-oxobutanoate + H2O2 + NH4(+). The enzyme catalyses D-histidine + O2 + H2O = 3-(imidazol-5-yl)pyruvate + H2O2 + NH4(+). Catalyzes the oxidative deamination of D-amino acids with broad substrate specificity. This Glutamicibacter protophormiae (Brevibacterium protophormiae) protein is D-amino-acid oxidase.